We begin with the raw amino-acid sequence, 735 residues long: Rho GTPase-activating protein SYDE1 (735 aa).

Disordered regions lie at residues 1–253 (MAEP…PYEV), 601–655 (PDTR…AGDW), and 669–706 (FLSG…FDAP). Basic and acidic residues predominate over residues 14-47 (RGREKLPRKKSDAKDRGRPAQRSEPKPPEPEPRV). Residues 151–160 (PTKTSRTKSP) show a composition bias toward low complexity. 4 positions are modified to phosphoserine: serine 224, serine 231, serine 235, and serine 244. In terms of domain architecture, C2 spans 249–366 (RPYEVGPSAR…FRGCQAQQLA (118 aa)). Residues 398-604 (LPLQLLVERE…YLLQSWPDTR (207 aa)) form the Rho-GAP domain. A compositionally biased stretch (basic and acidic residues) spans 669–679 (FLSGPDYDHVT). Residues serine 681 and serine 683 each carry the phosphoserine modification.

Palmitoylated. Probably palmitoylated by ZDHHC3 and ZDHHC7.

In terms of biological role, GTPase activator for the Rho-type GTPases. As a GCM1 downstream effector, it is involved in placental development and positively regulates trophoblast cells migration. It regulates cytoskeletal remodeling by controlling the activity of Rho GTPases including RHOA, CDC42 and RAC1. This is Rho GTPase-activating protein SYDE1 (Syde1) from Rattus norvegicus (Rat).